The primary structure comprises 590 residues: EGF-like and EMI domain-containing protein 1 (590 aa).

Positions 1–23 (MTSPLCFWCFCVWAAANWPPGSA) are cleaved as a signal peptide. Residues 44-104 (LSRPCAQAFI…RCCPGWIQWD (61 aa)) enclose the EMI domain. An EGF-like 1 domain is found at 105–145 (DEPGCFSSLSSLGTHFSGRECSYQDTRQCLCSQGFHGPHCQ). 11 disulfide bridges follow: Cys-109/Cys-125, Cys-135/Cys-144, Cys-168/Cys-179, Cys-175/Cys-188, Cys-190/Cys-203, Cys-209/Cys-219, Cys-215/Cys-228, Cys-230/Cys-243, Cys-249/Cys-260, Cys-256/Cys-269, and Cys-271/Cys-284. Positions 164–204 (NVDECAVVNGGCQQRCINTLGTFHCECDTGYRRHADERTCI) constitute an EGF-like 2; calcium-binding domain. Residues 205 to 244 (KTDPCAGANGCAHLCQTENGMARCACHAGYQLSEDKKACE) enclose the EGF-like 3 domain. The EGF-like 4; calcium-binding domain maps to 245 to 285 (DINECAGELAPCAHHCVNSKGSFTCTCHPGFELGADRKHCY). The segment at 393–424 (RLAQNPPQPFPYLDPSLTASYEDEDNDDADSE) is disordered. The span at 413-424 (YEDEDNDDADSE) shows a compositional bias: acidic residues. The 37-residue stretch at 445-481 (FGLDCSLSCEDCMNGGRCQEGKSGCLCPAEWTGLICN) folds into the EGF-like 5 domain. 3 disulfide bridges follow: Cys-449-Cys-462, Cys-456-Cys-469, and Cys-471-Cys-480.

The sequence is that of EGF-like and EMI domain-containing protein 1 (Egfem1) from Mus musculus (Mouse).